Consider the following 283-residue polypeptide: Bis(5'-nucleosyl)-tetraphosphatase, symmetrical (283 aa).

This sequence belongs to the Ap4A hydrolase family.

It catalyses the reaction P(1),P(4)-bis(5'-adenosyl) tetraphosphate + H2O = 2 ADP + 2 H(+). Functionally, hydrolyzes diadenosine 5',5'''-P1,P4-tetraphosphate to yield ADP. The sequence is that of Bis(5'-nucleosyl)-tetraphosphatase, symmetrical from Pseudomonas aeruginosa (strain LESB58).